Consider the following 302-residue polypeptide: tRNA pseudouridine synthase B (302 aa).

D43 serves as the catalytic Nucleophile.

This sequence belongs to the pseudouridine synthase TruB family. Type 1 subfamily.

It carries out the reaction uridine(55) in tRNA = pseudouridine(55) in tRNA. Its function is as follows. Responsible for synthesis of pseudouridine from uracil-55 in the psi GC loop of transfer RNAs. The protein is tRNA pseudouridine synthase B of Burkholderia mallei (strain NCTC 10247).